The chain runs to 116 residues: Protein TCL1B1 (116 aa).

This sequence belongs to the TCL1 family.

In Mus musculus (Mouse), this protein is Protein TCL1B1 (Tcl1b1).